Consider the following 129-residue polypeptide: UPF0344 protein SAR0931 (129 aa).

A run of 4 helical transmembrane segments spans residues 1–21 (MLHL…ATYL), 36–56 (LHMV…WILI), 67–87 (MLLT…EVSI), and 99–119 (MFWI…ILPL).

This sequence belongs to the UPF0344 family.

The protein resides in the cell membrane. The chain is UPF0344 protein SAR0931 from Staphylococcus aureus (strain MRSA252).